The chain runs to 570 residues: Sulfite reductase [NADPH] hemoprotein beta-component (570 aa).

[4Fe-4S] cluster contacts are provided by Cys-434, Cys-440, Cys-479, and Cys-483. A siroheme-binding site is contributed by Cys-483.

This sequence belongs to the nitrite and sulfite reductase 4Fe-4S domain family. As to quaternary structure, alpha(8)-beta(8). The alpha component is a flavoprotein, the beta component is a hemoprotein. It depends on siroheme as a cofactor. The cofactor is [4Fe-4S] cluster.

It catalyses the reaction hydrogen sulfide + 3 NADP(+) + 3 H2O = sulfite + 3 NADPH + 4 H(+). It participates in sulfur metabolism; hydrogen sulfide biosynthesis; hydrogen sulfide from sulfite (NADPH route): step 1/1. Functionally, component of the sulfite reductase complex that catalyzes the 6-electron reduction of sulfite to sulfide. This is one of several activities required for the biosynthesis of L-cysteine from sulfate. The protein is Sulfite reductase [NADPH] hemoprotein beta-component of Shigella boydii serotype 4 (strain Sb227).